Reading from the N-terminus, the 295-residue chain is MNLEPINNALSQLRVLRSSVGQVFETLGTGVRADHGEEGKEQKFLQELQELLNSVNANLKDFESCINDLTPPQTPLTLANSAYLSLETNLERQALYPHLVQSYKWHDKLHEYSTFASTLLQQNSLKRSYYTNTKRRRSLPSSHLATPQMVENLIGSIHYNNMNLKIARPFMTNAILHITIARVLRAAVILKGLLIEWVTVKGYEESLLDGVDEQWTESRHQVFRKVQDHAHSAMLHFFSPTLPELAIRSFITWFRSYVTLFADPCKKCGKHLHNTLPPTWRDLRTLEPFHEECKQ.

The protein belongs to the Mediator complex subunit 27 family. Component of the Mediator complex.

The protein resides in the nucleus. Component of the Mediator complex, a coactivator involved in the regulated transcription of nearly all RNA polymerase II-dependent genes. Mediator functions as a bridge to convey information from gene-specific regulatory proteins to the basal RNA polymerase II transcription machinery. Mediator is recruited to promoters by direct interactions with regulatory proteins and serves as a scaffold for the assembly of a functional preinitiation complex with RNA polymerase II and the general transcription factors. This Anopheles gambiae (African malaria mosquito) protein is Mediator of RNA polymerase II transcription subunit 27 (MED27).